A 132-amino-acid polypeptide reads, in one-letter code: Small ribosomal subunit protein uS8 (132 aa).

The protein belongs to the universal ribosomal protein uS8 family. In terms of assembly, part of the 30S ribosomal subunit. Contacts proteins S5 and S12.

Its function is as follows. One of the primary rRNA binding proteins, it binds directly to 16S rRNA central domain where it helps coordinate assembly of the platform of the 30S subunit. This is Small ribosomal subunit protein uS8 from Leifsonia xyli subsp. xyli (strain CTCB07).